The chain runs to 230 residues: 7-cyano-7-deazaguanine synthase (230 aa).

16–26 (LSGGLDSMVSG) is an ATP binding site. Zn(2+)-binding residues include Cys195, Cys205, Cys208, and Cys211.

The protein belongs to the QueC family. The cofactor is Zn(2+).

The catalysed reaction is 7-carboxy-7-deazaguanine + NH4(+) + ATP = 7-cyano-7-deazaguanine + ADP + phosphate + H2O + H(+). The protein operates within purine metabolism; 7-cyano-7-deazaguanine biosynthesis. Catalyzes the ATP-dependent conversion of 7-carboxy-7-deazaguanine (CDG) to 7-cyano-7-deazaguanine (preQ(0)). This chain is 7-cyano-7-deazaguanine synthase, found in Rhizorhabdus wittichii (strain DSM 6014 / CCUG 31198 / JCM 15750 / NBRC 105917 / EY 4224 / RW1) (Sphingomonas wittichii).